The sequence spans 324 residues: Glyoxylate/hydroxypyruvate reductase B (324 aa).

Catalysis depends on residues R237 and E266. Catalysis depends on H285, which acts as the Proton donor.

Belongs to the D-isomer specific 2-hydroxyacid dehydrogenase family. GhrB subfamily. In terms of assembly, homodimer.

Its subcellular location is the cytoplasm. The enzyme catalyses glycolate + NADP(+) = glyoxylate + NADPH + H(+). It catalyses the reaction (R)-glycerate + NAD(+) = 3-hydroxypyruvate + NADH + H(+). It carries out the reaction (R)-glycerate + NADP(+) = 3-hydroxypyruvate + NADPH + H(+). Functionally, catalyzes the NADPH-dependent reduction of glyoxylate and hydroxypyruvate into glycolate and glycerate, respectively. The sequence is that of Glyoxylate/hydroxypyruvate reductase B from Escherichia coli (strain K12 / MC4100 / BW2952).